We begin with the raw amino-acid sequence, 210 residues long: Ribonuclease HII (210 aa).

The region spanning 2-203 (SGVMGIDEAG…YKRVESEVKQ (202 aa)) is the RNase H type-2 domain. A divalent metal cation-binding residues include aspartate 8, glutamate 9, and aspartate 99.

It belongs to the RNase HII family. Mn(2+) serves as cofactor. It depends on Mg(2+) as a cofactor.

It localises to the cytoplasm. The enzyme catalyses Endonucleolytic cleavage to 5'-phosphomonoester.. In terms of biological role, endonuclease that specifically degrades the RNA of RNA-DNA hybrids. The polypeptide is Ribonuclease HII (Methanopyrus kandleri (strain AV19 / DSM 6324 / JCM 9639 / NBRC 100938)).